Consider the following 152-residue polypeptide: Small ribosomal subunit protein uS15 (152 aa).

Over residues 1–10 (MAKMHTRTKG) the composition is skewed to basic residues. The interval 1 to 26 (MAKMHTRTKGKSGSTKPIRSESPAWS) is disordered. Positions 11–26 (KSGSTKPIRSESPAWS) are enriched in polar residues.

The protein belongs to the universal ribosomal protein uS15 family. Part of the 30S ribosomal subunit.

The chain is Small ribosomal subunit protein uS15 from Methanococcoides burtonii (strain DSM 6242 / NBRC 107633 / OCM 468 / ACE-M).